The chain runs to 213 residues: Orotate phosphoribosyltransferase (213 aa).

K26 contributes to the 5-phospho-alpha-D-ribose 1-diphosphate binding site. Residue 34 to 35 (FF) participates in orotate binding. 5-phospho-alpha-D-ribose 1-diphosphate is bound by residues 72 to 73 (YK), R99, K100, K103, H105, and 124 to 132 (DDVITAGTA). Orotate-binding residues include T128 and R156.

The protein belongs to the purine/pyrimidine phosphoribosyltransferase family. PyrE subfamily. Homodimer. Mg(2+) serves as cofactor.

It carries out the reaction orotidine 5'-phosphate + diphosphate = orotate + 5-phospho-alpha-D-ribose 1-diphosphate. Its pathway is pyrimidine metabolism; UMP biosynthesis via de novo pathway; UMP from orotate: step 1/2. Functionally, catalyzes the transfer of a ribosyl phosphate group from 5-phosphoribose 1-diphosphate to orotate, leading to the formation of orotidine monophosphate (OMP). This chain is Orotate phosphoribosyltransferase, found in Vibrio cholerae serotype O1 (strain ATCC 39315 / El Tor Inaba N16961).